Here is a 362-residue protein sequence, read N- to C-terminus: Cobalt-precorrin-5B C(1)-methyltransferase (362 aa).

The protein belongs to the CbiD family.

It carries out the reaction Co-precorrin-5B + S-adenosyl-L-methionine = Co-precorrin-6A + S-adenosyl-L-homocysteine. It participates in cofactor biosynthesis; adenosylcobalamin biosynthesis; cob(II)yrinate a,c-diamide from sirohydrochlorin (anaerobic route): step 6/10. Catalyzes the methylation of C-1 in cobalt-precorrin-5B to form cobalt-precorrin-6A. The protein is Cobalt-precorrin-5B C(1)-methyltransferase of Desulfotalea psychrophila (strain LSv54 / DSM 12343).